A 478-amino-acid polypeptide reads, in one-letter code: ATP synthase subunit beta (478 aa).

164–171 (GGAGVGKT) provides a ligand contact to ATP.

The protein belongs to the ATPase alpha/beta chains family. F-type ATPases have 2 components, CF(1) - the catalytic core - and CF(0) - the membrane proton channel. CF(1) has five subunits: alpha(3), beta(3), gamma(1), delta(1), epsilon(1). CF(0) has three main subunits: a(1), b(2) and c(9-12). The alpha and beta chains form an alternating ring which encloses part of the gamma chain. CF(1) is attached to CF(0) by a central stalk formed by the gamma and epsilon chains, while a peripheral stalk is formed by the delta and b chains.

It localises to the cell membrane. It catalyses the reaction ATP + H2O + 4 H(+)(in) = ADP + phosphate + 5 H(+)(out). In terms of biological role, produces ATP from ADP in the presence of a proton gradient across the membrane. The catalytic sites are hosted primarily by the beta subunits. The protein is ATP synthase subunit beta of Streptomyces coelicolor (strain ATCC BAA-471 / A3(2) / M145).